Consider the following 329-residue polypeptide: Eukaryotic translation initiation factor 3 subunit I (329 aa).

WD repeat units lie at residues 8-47 (GHQRAITQIKYNREGDLLFSAAKDSKPNVWWSLNGERLGT), 50-89 (GHGGVIWCLDVDWQSINLITGGGDSSCRLWDLETGKNIAT), 145-184 (ITDSKVTSMIWGSLDETIITGHEAGDLIQWDLRTGKKIHS), 187-226 (EHTHQITDMQLSRDGTMFVTASKDHTAKLFDTNSLELLKE), and 284-323 (GHFGPINSLAFHPDGKSYASGGEDGYVRVHNFDQSYFDYT).

Belongs to the eIF-3 subunit I family. As to quaternary structure, component of the eukaryotic translation initiation factor 3 (eIF-3) complex.

It is found in the cytoplasm. Functionally, component of the eukaryotic translation initiation factor 3 (eIF-3) complex, which is involved in protein synthesis of a specialized repertoire of mRNAs and, together with other initiation factors, stimulates binding of mRNA and methionyl-tRNAi to the 40S ribosome. The eIF-3 complex specifically targets and initiates translation of a subset of mRNAs involved in cell proliferation. In Bombyx mori (Silk moth), this protein is Eukaryotic translation initiation factor 3 subunit I.